The following is a 231-amino-acid chain: Probable septum site-determining protein MinC (231 aa).

Positions 102 to 125 (KEKAPRPAPAPQAPAQNTTPVTKT) are disordered.

The protein belongs to the MinC family. Interacts with MinD and FtsZ.

Cell division inhibitor that blocks the formation of polar Z ring septums. Rapidly oscillates between the poles of the cell to destabilize FtsZ filaments that have formed before they mature into polar Z rings. Prevents FtsZ polymerization. The sequence is that of Probable septum site-determining protein MinC from Escherichia coli O139:H28 (strain E24377A / ETEC).